Reading from the N-terminus, the 68-residue chain is Protein transport protein Sec61 subunit gamma (68 aa).

Topologically, residues 1-32 (MDQFQALIEPARQFSKDSYRLVKRCTKPDRKE) are cytoplasmic. Residues 33-61 (YQKIAMATAIGFAIMGFIGFFVKLIHIPI) traverse the membrane as a helical segment. The Extracellular segment spans residues 62-68 (NNIIVGA).

This sequence belongs to the SecE/SEC61-gamma family. As to quaternary structure, heterotrimeric complex composed of SEC61-alpha, SEC61-beta and SEC61-gamma. Expressed in the germline. Expression in the germline is regulated in a sex- and meiotic cycle stage-specific manner. Expressed in somatic tissues including the intestine and somatic gonad. Expressed in the intestine more highly in hermaprodites than in males. In hermaphrodites, weakly expressed in the spermatheca.

The protein localises to the endoplasmic reticulum membrane. In terms of biological role, required for oocyte development and ovulation. Required for the translocation of secretory and transmembrane proteins into the endoplasmic reticulum in vitro. This chain is Protein transport protein Sec61 subunit gamma, found in Caenorhabditis elegans.